We begin with the raw amino-acid sequence, 507 residues long: Arylsulfatase A (507 aa).

Residues 1-18 (MGAPRSLLLALAAGLAVA) form the signal peptide. Residues aspartate 29, aspartate 30, and cysteine 69 each contribute to the Ca(2+) site. Cysteine 69 serves as the catalytic Nucleophile. Residue cysteine 69 is modified to 3-oxoalanine (Cys). Lysine 123 lines the substrate pocket. The active site involves histidine 125. Substrate is bound at residue serine 150. 2 cysteine pairs are disulfide-bonded: cysteine 156-cysteine 172 and cysteine 161-cysteine 168. N-linked (GlcNAc...) asparagine glycosylation occurs at asparagine 158. Residue asparagine 184 is glycosylated (N-linked (GlcNAc...) asparagine). Histidine 229 contacts substrate. The Ca(2+) site is built by aspartate 281 and asparagine 282. Disulfide bonds link cysteine 300/cysteine 414, cysteine 488/cysteine 500, cysteine 489/cysteine 502, and cysteine 493/cysteine 499. A substrate-binding site is contributed by lysine 302. A glycan (N-linked (GlcNAc...) asparagine) is linked at asparagine 350.

It belongs to the sulfatase family. In terms of assembly, homodimer at neutral pH and homooctamer at acidic pH. Exists both as a single chain of 58 kDa (component A) or as a chain of 50 kDa (component B) linked by disulfide bond(s) to a 7 kDa chain (component C). Interacts with SUMF1. Ca(2+) serves as cofactor. The conversion to 3-oxoalanine (also known as C-formylglycine, FGly), of a serine or cysteine residue in prokaryotes and of a cysteine residue in eukaryotes, is critical for catalytic activity. This post-translational modification is severely defective in multiple sulfatase deficiency (MSD).

It localises to the endoplasmic reticulum. It is found in the lysosome. The enzyme catalyses an N-acyl-1-beta-D-(3-O-sulfo)-galactosyl-sphing-4-enine + H2O = a beta-D-galactosyl-(1&lt;-&gt;1')-N-acylsphing-4-enine + sulfate + H(+). With respect to regulation, inhibited by phosphate. The phosphate forms a covalent bond with the active site 3-oxoalanine. Its function is as follows. Hydrolyzes cerebroside sulfate. In Homo sapiens (Human), this protein is Arylsulfatase A (ARSA).